The primary structure comprises 296 residues: uncharacterized protein (296 aa).

A helical transmembrane segment spans residues 1 to 21 (MIFAVVDILEISIQLLCILLF).

The protein resides in the membrane. This is an uncharacterized protein from Caenorhabditis elegans.